A 491-amino-acid chain; its full sequence is Protein DETOXIFICATION 20 (491 aa).

The next 12 membrane-spanning stretches (helical) occupy residues 37-57, 75-95, 120-140, 156-176, 185-205, 214-234, 265-285, 296-316, 337-357, 381-401, 413-433, and 438-458; these read LWVV…VSMV, ITFT…AGAL, IVLT…GPIL, LALW…CQMF, IISY…WLLV, GAMT…LLYV, GGML…TGNL, AICI…LAAV, LIAV…FLFL, LLAF…VAIG, LACY…VVGL, and VWIG…VMTL.

The protein belongs to the multi antimicrobial extrusion (MATE) (TC 2.A.66.1) family.

It is found in the membrane. This is Protein DETOXIFICATION 20 from Arabidopsis thaliana (Mouse-ear cress).